We begin with the raw amino-acid sequence, 780 residues long: Vacuolar protein sorting-associated protein 51 homolog (780 aa).

Ala2 carries the N-acetylalanine modification. 2 disordered regions span residues 270–292 (STLV…PAKI) and 615–651 (QGTF…SNSQ). Residues 273–284 (VEDDDSSNDTES) show a composition bias toward acidic residues. Over residues 626 to 639 (SNGSNTTTSSRSNT) the composition is skewed to low complexity.

It belongs to the VPS51 family. In terms of assembly, component of the Golgi-associated retrograde protein (GARP) complex, composed by VPS51, VPS52, VPS53 and VPS54. Component of the endosome-associated retrograde protein (EARP) complex, composed of VPS51, VPS52, VPS53 and VPS50. Interacts with VPS52. Expressed in primary and lateral roots, shoots of seedlings and flowers.

Its subcellular location is the golgi apparatus. The protein localises to the trans-Golgi network. It is found in the recycling endosome. The protein resides in the prevacuolar compartment. Functionally, acts as a component of the GARP complex that is involved in retrograde transport from early and late endosomes to the trans-Golgi network (TGN). The GARP complex is required for the maintenance of protein retrieval from endosomes to the TGN, acid hydrolase sorting, lysosome function, endosomal cholesterol traffic and autophagy. VPS51 participates in retrograde transport of acid hydrolase receptors, likely by promoting tethering and SNARE-dependent fusion of endosome-derived carriers to the TGN. Acts as a component of the EARP complex that is involved in endocytic recycling. The EARP complex associates with Rab4-positive endosomes and promotes recycling of internalized transferrin receptor (TFRC) to the plasma membrane. Required for vacuolar targeting and cellular trafficking. Involved in the regulation of vascular tissue patterning, probably by regulating PIN1 expression pattern, thus modulating auxin flux. Important to prevent PIN1 accumulation within margin cells, possibly by targeting PIN1 to the lytic vacuole. Regulates PIN1 and ATHB8 expression pattern in secondary veins. The protein is Vacuolar protein sorting-associated protein 51 homolog of Arabidopsis thaliana (Mouse-ear cress).